Consider the following 430-residue polypeptide: DNA damage-inducible protein DIN7 (430 aa).

The N-domain stretch occupies residues 1–96 (MGIPGLLPQL…HTETRRRKKR (96 aa)). Positions 30, 78, 150, 152, 171, 173, and 227 each coordinate Mg(2+). The interval 114–247 (NAMEYFQKSV…VTAMKIVKRY (134 aa)) is I-domain.

Belongs to the XPG/RAD2 endonuclease family. It depends on Mg(2+) as a cofactor.

The protein localises to the nucleus. Its function is as follows. 5'-&gt;3' double-stranded DNA exonuclease. This chain is DNA damage-inducible protein DIN7 (DIN7), found in Saccharomyces cerevisiae (strain ATCC 204508 / S288c) (Baker's yeast).